The primary structure comprises 284 residues: uncharacterized protein (284 aa).

A helical transmembrane segment spans residues 9–28 (IILRWVVTLYIYGFILYQIT).

Its subcellular location is the membrane. This is an uncharacterized protein from Aquifex aeolicus (strain VF5).